Reading from the N-terminus, the 419-residue chain is Enolase (419 aa).

(2R)-2-phosphoglycerate is bound at residue glutamine 161. The active-site Proton donor is glutamate 205. The Mg(2+) site is built by aspartate 240, glutamate 283, and aspartate 309. The (2R)-2-phosphoglycerate site is built by lysine 334, arginine 363, serine 364, and lysine 385. Lysine 334 functions as the Proton acceptor in the catalytic mechanism.

The protein belongs to the enolase family. Mg(2+) is required as a cofactor.

It localises to the cytoplasm. It is found in the secreted. The protein resides in the cell surface. The enzyme catalyses (2R)-2-phosphoglycerate = phosphoenolpyruvate + H2O. The protein operates within carbohydrate degradation; glycolysis; pyruvate from D-glyceraldehyde 3-phosphate: step 4/5. Its function is as follows. Catalyzes the reversible conversion of 2-phosphoglycerate (2-PG) into phosphoenolpyruvate (PEP). It is essential for the degradation of carbohydrates via glycolysis. The polypeptide is Enolase (Saccharolobus islandicus (strain M.16.27) (Sulfolobus islandicus)).